The primary structure comprises 234 residues: Thiamine import ATP-binding protein ThiQ (234 aa).

Residues 2-230 (LVLDDVQYTY…HPSKTLQAFV (229 aa)) form the ABC transporter domain. Residue 32–39 (GPSGAGKS) coordinates ATP.

It belongs to the ABC transporter superfamily. Thiamine importer (TC 3.A.1.19.1) family. As to quaternary structure, the complex is composed of two ATP-binding proteins (ThiQ), two transmembrane proteins (ThiP) and a solute-binding protein (ThiB).

Its subcellular location is the cell inner membrane. It carries out the reaction thiamine(out) + ATP + H2O = thiamine(in) + ADP + phosphate + H(+). Part of the ABC transporter complex ThiBPQ involved in thiamine import. Responsible for energy coupling to the transport system. The chain is Thiamine import ATP-binding protein ThiQ from Vibrio parahaemolyticus serotype O3:K6 (strain RIMD 2210633).